A 262-amino-acid chain; its full sequence is DNA-directed RNA polymerase subunit Rpo3 (262 aa).

Belongs to the archaeal Rpo3/eukaryotic RPB3 RNA polymerase subunit family. Part of the RNA polymerase complex.

It localises to the cytoplasm. It carries out the reaction RNA(n) + a ribonucleoside 5'-triphosphate = RNA(n+1) + diphosphate. In terms of biological role, DNA-dependent RNA polymerase (RNAP) catalyzes the transcription of DNA into RNA using the four ribonucleoside triphosphates as substrates. In Pyrobaculum neutrophilum (strain DSM 2338 / JCM 9278 / NBRC 100436 / V24Sta) (Thermoproteus neutrophilus), this protein is DNA-directed RNA polymerase subunit Rpo3.